We begin with the raw amino-acid sequence, 936 residues long: 2-oxoglutarate dehydrogenase E1 component (936 aa).

It belongs to the alpha-ketoglutarate dehydrogenase family. In terms of assembly, homodimer. Part of the 2-oxoglutarate dehydrogenase (OGDH) complex composed of E1 (2-oxoglutarate dehydrogenase), E2 (dihydrolipoamide succinyltransferase) and E3 (dihydrolipoamide dehydrogenase); the complex contains multiple copies of the three enzymatic components (E1, E2 and E3). Thiamine diphosphate serves as cofactor.

It catalyses the reaction N(6)-[(R)-lipoyl]-L-lysyl-[protein] + 2-oxoglutarate + H(+) = N(6)-[(R)-S(8)-succinyldihydrolipoyl]-L-lysyl-[protein] + CO2. Its function is as follows. E1 component of the 2-oxoglutarate dehydrogenase (OGDH) complex which catalyzes the decarboxylation of 2-oxoglutarate, the first step in the conversion of 2-oxoglutarate to succinyl-CoA and CO(2). The polypeptide is 2-oxoglutarate dehydrogenase E1 component (sucA) (Rickettsia prowazekii (strain Madrid E)).